A 367-amino-acid polypeptide reads, in one-letter code: tRNA 2-selenouridine synthase (367 aa).

Residues 15-138 (FLQARPLIDV…LRTFLIQILE (124 aa)) form the Rhodanese domain. Residue C98 is the S-selanylcysteine intermediate of the active site.

The protein belongs to the SelU family. Monomer.

The enzyme catalyses 5-methylaminomethyl-2-thiouridine(34) in tRNA + selenophosphate + (2E)-geranyl diphosphate + H2O + H(+) = 5-methylaminomethyl-2-selenouridine(34) in tRNA + (2E)-thiogeraniol + phosphate + diphosphate. It catalyses the reaction 5-methylaminomethyl-2-thiouridine(34) in tRNA + (2E)-geranyl diphosphate = 5-methylaminomethyl-S-(2E)-geranyl-thiouridine(34) in tRNA + diphosphate. The catalysed reaction is 5-methylaminomethyl-S-(2E)-geranyl-thiouridine(34) in tRNA + selenophosphate + H(+) = 5-methylaminomethyl-2-(Se-phospho)selenouridine(34) in tRNA + (2E)-thiogeraniol. It carries out the reaction 5-methylaminomethyl-2-(Se-phospho)selenouridine(34) in tRNA + H2O = 5-methylaminomethyl-2-selenouridine(34) in tRNA + phosphate. Involved in the post-transcriptional modification of the uridine at the wobble position (U34) of tRNA(Lys), tRNA(Glu) and tRNA(Gln). Catalyzes the conversion of 2-thiouridine (S2U-RNA) to 2-selenouridine (Se2U-RNA). Acts in a two-step process involving geranylation of 2-thiouridine (S2U) to S-geranyl-2-thiouridine (geS2U) and subsequent selenation of the latter derivative to 2-selenouridine (Se2U) in the tRNA chain. In Shewanella denitrificans (strain OS217 / ATCC BAA-1090 / DSM 15013), this protein is tRNA 2-selenouridine synthase.